Reading from the N-terminus, the 131-residue chain is Neo-calmodulin (131 aa).

4 consecutive EF-hand domains span residues 1–32 (EFKE…LGQN), 33–68 (PTEA…KMKD), 70–105 (DSEE…LGEK), and 106–131 (LTDE…YEEF). 20 residues coordinate Ca(2+): Asp-10, Asp-12, Asp-14, Thr-16, Glu-21, Asp-46, Asp-48, Asn-50, Thr-52, Glu-57, Asp-83, Asp-85, Asn-87, Tyr-89, Glu-94, Asp-119, Asp-121, Asp-123, Gln-125, and Glu-130.

The protein belongs to the calmodulin family.

This is Neo-calmodulin from Gallus gallus (Chicken).